The primary structure comprises 107 residues: Toxin MT2730 (107 aa).

Positions 1–42 are disordered; that stretch reads MTHKRTKRQPAIAAGLNAPRRNRVGRQHGWPADVPSAEQRRA.

Functionally, toxic component of a type II toxin-antitoxin (TA) system. Its toxic effect is neutralized by coexpression with cognate antitoxin MT2731. The chain is Toxin MT2730 from Mycobacterium tuberculosis (strain CDC 1551 / Oshkosh).